The primary structure comprises 226 residues: tRNA (guanine-N(7)-)-methyltransferase (226 aa).

The disordered stretch occupies residues 1–21; that stretch reads MTHPQQPHGPLRSFGRLKSRP. Residues glutamate 59, glutamate 84, aspartate 111, and aspartate 133 each coordinate S-adenosyl-L-methionine. Aspartate 133 is a catalytic residue. Position 137 (lysine 137) interacts with substrate. The interaction with RNA stretch occupies residues 139–144; the sequence is RHNKRR. Substrate contacts are provided by residues aspartate 169 and 206 to 209; that span reads TRYE.

Belongs to the class I-like SAM-binding methyltransferase superfamily. TrmB family.

The enzyme catalyses guanosine(46) in tRNA + S-adenosyl-L-methionine = N(7)-methylguanosine(46) in tRNA + S-adenosyl-L-homocysteine. Its pathway is tRNA modification; N(7)-methylguanine-tRNA biosynthesis. Functionally, catalyzes the formation of N(7)-methylguanine at position 46 (m7G46) in tRNA. This is tRNA (guanine-N(7)-)-methyltransferase from Caulobacter sp. (strain K31).